Consider the following 383-residue polypeptide: Na(+)/H(+) antiporter NhaA (383 aa).

The next 11 helical transmembrane spans lie at 14–34, 47–67, 87–107, 117–137, 146–166, 171–191, 205–225, 252–272, 280–300, 321–341, and 356–376; these read AGGILLVIAAAIAMTIANSPL, FGMSVSHWINDGLMAVFFLLI, IFPAIAAVGGMLAPALIYVAF, GWAIPAATDIAFALGIMALLG, VFLLALAIIDDLGVVVIIALF, LSSMALLVGFVMTGVLFMLNA, AILWFAVLKSGVHATLAGVVI, VAFGILPLFAFANAGISLEGV, MLPLGIALGLLIGKPLGIFSF, IFAVSVLCGIGFTMSIFISSL, and LGILMGSTTAAVLGYALLHFS.

This sequence belongs to the NhaA Na(+)/H(+) (TC 2.A.33) antiporter family.

It localises to the cell inner membrane. The enzyme catalyses Na(+)(in) + 2 H(+)(out) = Na(+)(out) + 2 H(+)(in). It catalyses the reaction Li(+)(in) + 2 H(+)(out) = Li(+)(out) + 2 H(+)(in). Activity is regulated by pH. Active at alkaline pH. Amiloride strongly reduces affinity for Na(+), but does not change the Vmax. Functionally, na(+)/H(+) antiporter that extrudes sodium in exchange for external protons. Can also transport lithium and potassium. The sequence is that of Na(+)/H(+) antiporter NhaA from Vibrio parahaemolyticus serotype O3:K6 (strain RIMD 2210633).